Reading from the N-terminus, the 216-residue chain is Probable nicotinate-nucleotide adenylyltransferase (216 aa).

The protein belongs to the NadD family.

The enzyme catalyses nicotinate beta-D-ribonucleotide + ATP + H(+) = deamido-NAD(+) + diphosphate. The protein operates within cofactor biosynthesis; NAD(+) biosynthesis; deamido-NAD(+) from nicotinate D-ribonucleotide: step 1/1. Catalyzes the reversible adenylation of nicotinate mononucleotide (NaMN) to nicotinic acid adenine dinucleotide (NaAD). The chain is Probable nicotinate-nucleotide adenylyltransferase from Shewanella baltica (strain OS223).